The following is a 188-amino-acid chain: RNA 2',3'-cyclic phosphodiesterase (188 aa).

His-42 (proton donor) is an active-site residue. 2 short sequence motifs (HXTX) span residues His-42–Leu-45 and His-130–Ile-133. His-130 acts as the Proton acceptor in catalysis.

It belongs to the 2H phosphoesterase superfamily. ThpR family.

It carries out the reaction a 3'-end 2',3'-cyclophospho-ribonucleotide-RNA + H2O = a 3'-end 2'-phospho-ribonucleotide-RNA + H(+). Hydrolyzes RNA 2',3'-cyclic phosphodiester to an RNA 2'-phosphomonoester. The chain is RNA 2',3'-cyclic phosphodiesterase from Aquifex aeolicus (strain VF5).